The sequence spans 85 residues: MGLIDFLRNKTKTAETAKNRLQIIIAQERTQRGGPDYLPLLQRELLEVIKKYVKIDADAVKVDLIKDGANDVLDISVALPDDSER.

This sequence belongs to the MinE family.

In terms of biological role, prevents the cell division inhibition by proteins MinC and MinD at internal division sites while permitting inhibition at polar sites. This ensures cell division at the proper site by restricting the formation of a division septum at the midpoint of the long axis of the cell. This chain is Cell division topological specificity factor, found in Xylella fastidiosa (strain M23).